We begin with the raw amino-acid sequence, 250 residues long: Zinc finger protein lsy-27 (250 aa).

2 C2H2-type zinc fingers span residues 25–48 and 52–75; these read FVCS…QLMH and HTCM…RNEH. The segment at 81–104 adopts a C2H2-type 3; degenerate zinc-finger fold; the sequence is FTCGCCNWTFASKRQLTEHTKCIQ. 2 disordered regions span residues 126–177 and 226–250; these read IQST…EAER and QKVK…QEIE. The span at 148 to 165 shows a compositional bias: low complexity; sequence SLSPSSSVSTSISSRDAS. Basic and acidic residues predominate over residues 239-250; that stretch reads MIPEKHVKQEIE.

Involved in regulating left/right asymmetric differentiation of the gustatory ASE neurons. Plays a role in modulating expression of LIM/homeobox protein lim-6. The sequence is that of Zinc finger protein lsy-27 from Caenorhabditis elegans.